Here is a 310-residue protein sequence, read N- to C-terminus: Olfactory receptor 5P1 (310 aa).

At 1–25 (MEPGNHTAVTKFILLGLTDDPTLCV) the chain is on the extracellular side. Residue asparagine 5 is glycosylated (N-linked (GlcNAc...) asparagine). Residues 26-46 (IFFVFFLGIYIVTLVGNISII) traverse the membrane as a helical segment. Topologically, residues 47-54 (NLVRSCPQ) are cytoplasmic. Residues 55 to 75 (LQTPMYMFLSHLAFVDIGYST) form a helical membrane-spanning segment. Residues 76-99 (SVTPIMLIGFIVHETGLPVHACEA) lie on the Extracellular side of the membrane. Cysteines 97 and 189 form a disulfide. Residues 100–120 (QLCSVVTFGTAECFLLAAMAY) form a helical membrane-spanning segment. At 121–133 (DRYVAICSPLLYS) the chain is on the cytoplasmic side. Residues 134 to 154 (THMSSQICLLLVGASYVGGCV) traverse the membrane as a helical segment. Residues 155–196 (NAWTFTGCLLSLSFCGPNKIDHFFCDFSPLLKLSCSDVSIIG) lie on the Extracellular side of the membrane. The helical transmembrane segment at 197 to 217 (IIPSISAGSIIVVTVFVISVS) threads the bilayer. The Cytoplasmic segment spans residues 218 to 237 (YIYILITILKMRSTEGRHKA). A helical membrane pass occupies residues 238-258 (FSTCTSHLTAVTLYYGTITFI). At 259–271 (YVMPKSSYSTKQN) the chain is on the extracellular side. Residues 272 to 292 (RVVSLFYTVVIPMLNPLIYSL) form a helical membrane-spanning segment. The Cytoplasmic segment spans residues 293–310 (RNRDVKEALRKATLRIYS).

The protein belongs to the G-protein coupled receptor 1 family.

The protein localises to the cell membrane. Potential odorant receptor. The chain is Olfactory receptor 5P1 from Mus musculus (Mouse).